A 263-amino-acid chain; its full sequence is MSRLTAEAISLSFEQRGQRRAILRDLSLGLAKGESLVVLGPSGCGKSTLLNILAGFQKPDQGRVQIDGRTLEGPGGERGVVFQDDALMPWLNALDNVALGLRIRGLGKAERTARARQVLQLVGLQEYAEQSVAQLSGGQRQRLGLARALAVEPDFLLLDEPFGALDALTRERMQVLLLDLWKQTGKGLFLITHSVDEALFLATDLVVMDGPPARIVKRLPVDFARRYAAGETVRSIKADPEFGRLRQALLDEFLDVAEAEHAH.

Positions 4–235 constitute an ABC transporter domain; sequence LTAEAISLSF…RYAAGETVRS (232 aa). 40–47 provides a ligand contact to ATP; sequence GPSGCGKS.

The protein belongs to the ABC transporter superfamily. Taurine importer (TC 3.A.1.17.1) family. The complex is composed of two ATP-binding proteins (TauB), two transmembrane proteins (TauC) and a solute-binding protein (TauA).

The protein localises to the cell inner membrane. The enzyme catalyses taurine(out) + ATP + H2O = taurine(in) + ADP + phosphate + H(+). Its function is as follows. Part of the ABC transporter complex TauABC involved in taurine import. Responsible for energy coupling to the transport system. The chain is Taurine import ATP-binding protein TauB from Pseudomonas aeruginosa (strain ATCC 15692 / DSM 22644 / CIP 104116 / JCM 14847 / LMG 12228 / 1C / PRS 101 / PAO1).